Consider the following 263-residue polypeptide: Putative hydro-lyase Psyc_1103 (263 aa).

It belongs to the D-glutamate cyclase family.

In Psychrobacter arcticus (strain DSM 17307 / VKM B-2377 / 273-4), this protein is Putative hydro-lyase Psyc_1103.